Consider the following 339-residue polypeptide: Aspartate carbamoyltransferase catalytic subunit (339 aa).

R59 and T60 together coordinate carbamoyl phosphate. K87 serves as a coordination point for L-aspartate. Carbamoyl phosphate-binding residues include R109, H142, and Q145. L-aspartate is bound by residues R182 and R253. Residues G294 and P295 each coordinate carbamoyl phosphate.

The protein belongs to the aspartate/ornithine carbamoyltransferase superfamily. ATCase family. Heterododecamer (2C3:3R2) of six catalytic PyrB chains organized as two trimers (C3), and six regulatory PyrI chains organized as three dimers (R2).

The catalysed reaction is carbamoyl phosphate + L-aspartate = N-carbamoyl-L-aspartate + phosphate + H(+). It functions in the pathway pyrimidine metabolism; UMP biosynthesis via de novo pathway; (S)-dihydroorotate from bicarbonate: step 2/3. Catalyzes the condensation of carbamoyl phosphate and aspartate to form carbamoyl aspartate and inorganic phosphate, the committed step in the de novo pyrimidine nucleotide biosynthesis pathway. The chain is Aspartate carbamoyltransferase catalytic subunit from Prochlorococcus marinus (strain NATL2A).